Here is a 498-residue protein sequence, read N- to C-terminus: ATP synthase subunit beta, chloroplastic (498 aa).

172 to 179 (GGAGVGKT) lines the ATP pocket.

It belongs to the ATPase alpha/beta chains family. In terms of assembly, F-type ATPases have 2 components, CF(1) - the catalytic core - and CF(0) - the membrane proton channel. CF(1) has five subunits: alpha(3), beta(3), gamma(1), delta(1), epsilon(1). CF(0) has four main subunits: a(1), b(1), b'(1) and c(9-12).

It localises to the plastid. Its subcellular location is the chloroplast thylakoid membrane. It catalyses the reaction ATP + H2O + 4 H(+)(in) = ADP + phosphate + 5 H(+)(out). In terms of biological role, produces ATP from ADP in the presence of a proton gradient across the membrane. The catalytic sites are hosted primarily by the beta subunits. The chain is ATP synthase subunit beta, chloroplastic from Solanum tuberosum (Potato).